The following is a 344-amino-acid chain: Homoserine O-acetyltransferase (344 aa).

The Acyl-thioester intermediate role is filled by C142. Positions 163 and 192 each coordinate substrate. H235 functions as the Proton acceptor in the catalytic mechanism. E237 is a catalytic residue. A substrate-binding site is contributed by R249.

It belongs to the MetA family.

The protein resides in the cytoplasm. It carries out the reaction L-homoserine + acetyl-CoA = O-acetyl-L-homoserine + CoA. The protein operates within amino-acid biosynthesis; L-methionine biosynthesis via de novo pathway; O-acetyl-L-homoserine from L-homoserine: step 1/1. In terms of biological role, transfers an acetyl group from acetyl-CoA to L-homoserine, forming acetyl-L-homoserine. The sequence is that of Homoserine O-acetyltransferase from Bifidobacterium adolescentis (strain ATCC 15703 / DSM 20083 / NCTC 11814 / E194a).